A 214-amino-acid polypeptide reads, in one-letter code: Probable nicotinate-nucleotide adenylyltransferase (214 aa).

The protein belongs to the NadD family.

It carries out the reaction nicotinate beta-D-ribonucleotide + ATP + H(+) = deamido-NAD(+) + diphosphate. It participates in cofactor biosynthesis; NAD(+) biosynthesis; deamido-NAD(+) from nicotinate D-ribonucleotide: step 1/1. Functionally, catalyzes the reversible adenylation of nicotinate mononucleotide (NaMN) to nicotinic acid adenine dinucleotide (NaAD). The polypeptide is Probable nicotinate-nucleotide adenylyltransferase (Mycobacterium bovis (strain ATCC BAA-935 / AF2122/97)).